We begin with the raw amino-acid sequence, 340 residues long: Immunoglobulin-binding protein 1 (340 aa).

The UIM domain maps to 47–61; it reads LELLEKAAGMLSQLD. Residues 99–203 form an interaction with PPP2CA region; it reads RLDHLQRARE…HLLHLRRWIA (105 aa). 2 disordered regions span residues 223–242 and 291–340; these read DSPREETACHSSLPEKPPMK and SADF…QNMG. The interval 226–291 is interaction with MID1; that stretch reads REETACHSSL…PDRGIAKPAS (66 aa). At K242 the chain carries N6-acetyllysine. Residues 292–301 are compositionally biased toward low complexity; sequence ADFQRAAQQQ. Residues 302 to 312 are compositionally biased toward acidic residues; sequence EDQEQKDEESE. Positions 313–330 are enriched in basic and acidic residues; that stretch reads EKALHRMREWDDWKDTHP.

Belongs to the IGBP1/TAP42 family. Interacts with PPP2CB, and with PP4 and PP6. Interacts with MID2. Interacts with ubiquitin. Interacts with partially folded PPP2CA, but not with the fully active protein. Interacts with MID1. Phosphorylated. In terms of processing, monoubiquitination by MID1 triggers calpain-mediated cleavage and switches IGBP1 activity from protective to destructive. In terms of tissue distribution, expressed in spleen, thymus, liver and brain. Ubiquitously expressed in B lineage cell lines.

The protein resides in the cytoplasm. Its function is as follows. Associated to surface IgM-receptor; may be involved in signal transduction. Involved in regulation of the catalytic activity of the phosphatases PP2A, PP4 and PP6 by protecting their partially folded catalytic subunits from degradative polyubiquitination until they associate with regulatory subunits. This chain is Immunoglobulin-binding protein 1 (Igbp1), found in Mus musculus (Mouse).